Consider the following 260-residue polypeptide: Hydroxyethylthiazole kinase (260 aa).

Residue Met38 participates in substrate binding. Residues Lys114 and Ser161 each contribute to the ATP site. Gly188 serves as a coordination point for substrate.

This sequence belongs to the Thz kinase family. Requires Mg(2+) as cofactor.

It catalyses the reaction 5-(2-hydroxyethyl)-4-methylthiazole + ATP = 4-methyl-5-(2-phosphooxyethyl)-thiazole + ADP + H(+). The protein operates within cofactor biosynthesis; thiamine diphosphate biosynthesis; 4-methyl-5-(2-phosphoethyl)-thiazole from 5-(2-hydroxyethyl)-4-methylthiazole: step 1/1. Catalyzes the phosphorylation of the hydroxyl group of 4-methyl-5-beta-hydroxyethylthiazole (THZ). The chain is Hydroxyethylthiazole kinase from Campylobacter lari (strain RM2100 / D67 / ATCC BAA-1060).